A 143-amino-acid chain; its full sequence is Large ribosomal subunit protein uL16c (143 aa).

It belongs to the universal ribosomal protein uL16 family. In terms of assembly, part of the 50S ribosomal subunit.

The protein resides in the plastid. It localises to the chloroplast. This is Large ribosomal subunit protein uL16c from Marchantia polymorpha (Common liverwort).